Consider the following 70-residue polypeptide: DNA-directed RNA polymerase subunit omega (70 aa).

This sequence belongs to the RNA polymerase subunit omega family. In terms of assembly, the RNAP catalytic core consists of 2 alpha, 1 beta, 1 beta' and 1 omega subunit. When a sigma factor is associated with the core the holoenzyme is formed, which can initiate transcription.

The catalysed reaction is RNA(n) + a ribonucleoside 5'-triphosphate = RNA(n+1) + diphosphate. Its function is as follows. Promotes RNA polymerase assembly. Latches the N- and C-terminal regions of the beta' subunit thereby facilitating its interaction with the beta and alpha subunits. The chain is DNA-directed RNA polymerase subunit omega from Staphylococcus epidermidis (strain ATCC 35984 / DSM 28319 / BCRC 17069 / CCUG 31568 / BM 3577 / RP62A).